The following is a 270-amino-acid chain: Phosphatidylglycerol--prolipoprotein diacylglyceryl transferase (270 aa).

4 consecutive transmembrane segments (helical) span residues Phe19 to Ala39, Leu56 to Glu76, Gln92 to Ala112, and Gly116 to Ile136. A 1,2-diacyl-sn-glycero-3-phospho-(1'-sn-glycerol) is bound at residue Arg138. The next 3 helical transmembrane spans lie at His178–Leu198, Gly206–Leu226, and Leu236–Val256.

This sequence belongs to the Lgt family.

Its subcellular location is the cell membrane. The catalysed reaction is L-cysteinyl-[prolipoprotein] + a 1,2-diacyl-sn-glycero-3-phospho-(1'-sn-glycerol) = an S-1,2-diacyl-sn-glyceryl-L-cysteinyl-[prolipoprotein] + sn-glycerol 1-phosphate + H(+). The protein operates within protein modification; lipoprotein biosynthesis (diacylglyceryl transfer). In terms of biological role, catalyzes the transfer of the diacylglyceryl group from phosphatidylglycerol to the sulfhydryl group of the N-terminal cysteine of a prolipoprotein, the first step in the formation of mature lipoproteins. In Bacillus cereus (strain ATCC 14579 / DSM 31 / CCUG 7414 / JCM 2152 / NBRC 15305 / NCIMB 9373 / NCTC 2599 / NRRL B-3711), this protein is Phosphatidylglycerol--prolipoprotein diacylglyceryl transferase.